The primary structure comprises 354 residues: tRNA dimethylallyltransferase (354 aa).

28 to 35 contacts ATP; that stretch reads GPTATGKS. A substrate-binding site is contributed by 30 to 35; the sequence is TATGKS. An interaction with substrate tRNA region spans residues 53–56; it reads DSRQ.

Belongs to the IPP transferase family. As to quaternary structure, monomer. The cofactor is Mg(2+).

It catalyses the reaction adenosine(37) in tRNA + dimethylallyl diphosphate = N(6)-dimethylallyladenosine(37) in tRNA + diphosphate. Functionally, catalyzes the transfer of a dimethylallyl group onto the adenine at position 37 in tRNAs that read codons beginning with uridine, leading to the formation of N6-(dimethylallyl)adenosine (i(6)A). In Synechococcus sp. (strain JA-2-3B'a(2-13)) (Cyanobacteria bacterium Yellowstone B-Prime), this protein is tRNA dimethylallyltransferase.